The chain runs to 60 residues: Metallothionein (60 aa).

Met1 carries the post-translational modification N-acetylmethionine. The tract at residues 1–28 (MDPCECSKTGTCNCGGSCTCKNCSCTTC) is beta. A divalent metal cation is bound by residues Cys4, Cys6, Cys12, Cys14, Cys18, Cys20, Cys23, Cys25, Cys28, Cys32, Cys33, Cys35, Cys36, Cys40, Cys43, Cys47, Cys49, Cys54, Cys58, and Cys59. Residues 29 to 60 (TKSCCPCCPSGCPKCASGCVCKGKTCDTTCCQ) are alpha.

The protein belongs to the metallothionein superfamily. Type 1 family.

Functionally, metallothioneins have a high content of cysteine residues that bind various heavy metals. This chain is Metallothionein (mt), found in Pseudopleuronectes americanus (Winter flounder).